We begin with the raw amino-acid sequence, 1679 residues long: GRIP and coiled-coil domain-containing protein 2 (1679 aa).

Met1 carries the N-acetylmethionine modification. 2 disordered regions span residues 1 to 23 (MEDS…KLET) and 1466 to 1522 (LKSE…SAGT). The stretch at 35–1469 (KQMMLLQKAK…ETQLFQLKSE (1435 aa)) forms a coiled coil. Ser1474 and Ser1478 each carry phosphoserine. Residues 1474-1483 (SPASSHQPSK) are compositionally biased toward polar residues. The segment at 1569-1608 (HLNGLLRETEATNAILMEQIKLLKSEIRRLERNQEREKSV) is mediates interaction with RAB6A. Positions 1569–1679 (HLNGLLRETE…SYLHSWSGLR (111 aa)) are mediates interaction with RAB9A. One can recognise a GRIP domain in the interval 1604-1654 (REKSVANLEYLKNVLLRFIFLKPGSERERLLPVIDTMLQLSPEEKGKLATV).

As to quaternary structure, homodimer. Interacts (via GRIP domain) with RAB6A (preferentially in its GTP-bound form). May interact (RAB6A-dependent) with ARL1; might be involved in GCC2 Golgi localization. Interacts with CLASP1 and CLASP2; recruits both proteins to membranes of the TGN. Interacts with STX16. Interacts (probably via GRIP domain) with RAB9A (preferentially in its GTP-bound form).

The protein resides in the cytoplasm. Its subcellular location is the golgi apparatus. It is found in the trans-Golgi network membrane. In terms of biological role, golgin which probably tethers transport vesicles to the trans-Golgi network (TGN) and regulates vesicular transport between the endosomes and the Golgi. As a RAB9A effector it is involved in recycling of the mannose 6-phosphate receptor from the late endosomes to the TGN. May also play a role in transport between the recycling endosomes and the Golgi. Required for maintenance of the Golgi structure, it is involved in the biogenesis of noncentrosomal, Golgi-associated microtubules through recruitment of CLASP1 and CLASP2. The polypeptide is GRIP and coiled-coil domain-containing protein 2 (Gcc2) (Rattus norvegicus (Rat)).